Here is an 89-residue protein sequence, read N- to C-terminus: UPF0367 protein P9515_01381 (89 aa).

This sequence belongs to the UPF0367 family.

The polypeptide is UPF0367 protein P9515_01381 (Prochlorococcus marinus (strain MIT 9515)).